The following is a 268-amino-acid chain: M1-specific T cell receptor alpha chain (268 aa).

A signal peptide spans 1–19 (MVLKFSVSILWIQLAWVST). The region spanning 20–107 (QLLEQSPQFL…QPGDTGLYLC (88 aa)) is the Ig-like V-type domain. The segment at 20–109 (QLLEQSPQFL…GDTGLYLCAG (90 aa)) is t cell receptor alpha variable 27. N-linked (GlcNAc...) asparagine glycans are attached at residues Asn-36 and Asn-42. Cys-41 and Cys-107 are joined by a disulfide. The segment at 45–49 (SVFSS) is CDR1. Residues 67-69 (VVT) are CDR2. The interval 107–118 (CAGGGSQGNLIF) is CDR3. The tract at residues 110–128 (GGSQGNLIFGKGTKLSVKP) is t cell receptor alpha joining 42. A t cell receptor alpha constant region spans residues 129 to 268 (IQNPDPAVYQ…LLMTLRLWSS (140 aa)). Residues 147–235 (KSVCLFTDFD…LVEKSFETDT (89 aa)) form the Ig-like C1-type domain. Cys-150 and Cys-200 are joined by a disulfide. Residues Asn-160, Asn-194, Asn-205, and Asn-241 are each glycosylated (N-linked (GlcNAc...) asparagine). Residues 222 to 243 (CDVKLVEKSFETDTNLNFQNLS) are connecting peptide. The chain crosses the membrane as a helical span at residues 244–266 (VIGFRILLLKVAGFNLLMTLRLW). Residues 267 to 268 (SS) lie on the Cytoplasmic side of the membrane.

In terms of assembly, disulfide-linked heterodimer with TRBV19*01J2S7*01C*02 beta chain. The TR primarily interacts via its CDR3-beta domain with M/matrix protein 1-derived peptide (GILGFVFTL) displayed by HLA-A*02.01 in a 'peg-notch' recognition mode. The alpha-beta TR associates with the transmembrane signaling CD3 coreceptor proteins to form the TR-CD3 (TCR). The assembly of alpha-beta TR heterodimers with CD3 occurs in the endoplasmic reticulum where a single alpha-beta TR heterodimer associates with one CD3D-CD3E heterodimer, one CD3G-CD3E heterodimer and one CD247 homodimer forming a stable octameric structure. CD3D-CD3E and CD3G-CD3E heterodimers preferentially associate with TR alpha and TR beta chains (via TM domain), respectively. The association of the CD247 homodimer is the last step of TCR assembly in the endoplasmic reticulum and is required for transport to the cell surface. In terms of tissue distribution, expressed in M/matrix protein 1-specific effector and memory CD8-positive T cells readily detectable in the peripheral blood, secondary lymphoid organs and lung (primary site of infection) of IAV infected individuals.

The protein resides in the cell membrane. Functionally, the alpha chain of TRAV27*01J42*01C*01/TRBV19*01J2S7*01C*02 alpha-beta T cell receptor (TR) clonotype that is specific for HLA-A*02:01-restricted M/matrix protein 1 immunodominant epitope GILGFVFTL of influenza A virus (IAV). Classified as a public TR clonotype, it is preferentially selected in effector memory CD8-positive T cells among multiple HLA-A*02:01 carriers and confers long-lived immunity against IAV infection. Can cross-recognize sporadically emerging IAV variants by molecular mimicry, inducing immunity toward different influenza strains. Antigen recognition initiates TR-CD3 clustering on the cell surface and intracellular activation of LCK that phosphorylates the ITAM motifs of CD3G, CD3D, CD3E and CD247 enabling the recruitment of ZAP70. In turn, ZAP70 phosphorylates LAT, which recruits numerous signaling molecules to form the LAT signalosome. The LAT signalosome propagates signal branching to three major signaling pathways, the calcium, the mitogen-activated protein kinase (MAPK) kinase and the nuclear factor NF-kappa-B (NF-kB) pathways, leading to the mobilization of transcription factors that are critical for gene expression and essential for T cell differentiation into effector/memory T cells. The polypeptide is M1-specific T cell receptor alpha chain (Homo sapiens (Human)).